Here is a 381-residue protein sequence, read N- to C-terminus: MKEAVVIWAKRTPFGKYGGALRHLEPEALLLPLFQNLKQTFPEVMDQVDDVVLGNVVGNGGNVARKSLLEAGLNHRIPGITLDRQCGSGLESIIYACRMVQCEAGKVFIAGGVESTSRAPWKIKRPQSVYEMQLPQFFERASFAPEGQDPSMIEAAENVAQHYNISRNDQDLFAARSHRLVATHFNNGDINREIVPLTIKGALFDRDESLKPNLTEARLHRLRPILPNGTVTVGNSCMKNDGAGIALIMEKEMAVAMGIKWGMLYRDAVTTGVDPTLLGIGPVPAVSQLLKRQKLNIEDISAIELNEAFSSQVLASINELHLGLDKVNQWGGAIATGHPYSASGAALVARLLNLPNWQYGIATMGIGGGMGNAVLFEKWRQ.

Catalysis depends on Cys86, which acts as the Acyl-thioester intermediate. The active-site Proton acceptor is the His338.

The protein belongs to the thiolase-like superfamily. Thiolase family.

In Staphylococcus haemolyticus (strain JCSC1435), this protein is Putative acetyl-CoA C-acetyltransferase VraB (vraB).